Reading from the N-terminus, the 237-residue chain is MYRILLVEDDERIASLLGGHLQKYGYEVKIAEQLNDIKLEFAEMKPDLVLLDINLPFFDGFYWCRQIRTISNAPIIFISARTDELNQVMAIENGGDDYITKPFHLEVVMAKIKSVLRRTYGEYSPSLPQESRIVELGGLTIYPDQNEAEWNSVRILFSQKEFQLLSIFVREHKKIVSRDELLEALWDDVDFVDDNTLTVNVNRLRRKLENAGLTDCISTIRGQGYQFQVNRKDEAEC.

The Response regulatory domain occupies 3-116; the sequence is RILLVEDDER…VVMAKIKSVL (114 aa). Aspartate 52 bears the 4-aspartylphosphate mark. A DNA-binding region (ompR/PhoB-type) is located at residues 131 to 229; it reads SRIVELGGLT…IRGQGYQFQV (99 aa).

Phosphorylated by YvcQ.

It localises to the cytoplasm. In terms of biological role, member of the two-component regulatory system YvcQ/YvcP. This is an uncharacterized protein from Bacillus subtilis (strain 168).